We begin with the raw amino-acid sequence, 292 residues long: Non-homologous end joining protein Ku (292 aa).

Residues 9–187 (ITFGLVNVPV…TVPPITEREL (179 aa)) form the Ku domain. Residues 264–285 (AASAFPAAEKAPAGKNAATASA) are compositionally biased toward low complexity. Residues 264–292 (AASAFPAAEKAPAGKNAATASAKKARKLA) are disordered.

It belongs to the prokaryotic Ku family. In terms of assembly, homodimer. Interacts with LigD.

Functionally, with LigD forms a non-homologous end joining (NHEJ) DNA repair enzyme, which repairs dsDNA breaks with reduced fidelity. Binds linear dsDNA with 5'- and 3'- overhangs but not closed circular dsDNA nor ssDNA. Recruits and stimulates the ligase activity of LigD. This is Non-homologous end joining protein Ku from Leifsonia xyli subsp. xyli (strain CTCB07).